A 704-amino-acid chain; its full sequence is Glycine--tRNA ligase beta subunit (704 aa).

Belongs to the class-II aminoacyl-tRNA synthetase family. As to quaternary structure, tetramer of two alpha and two beta subunits.

Its subcellular location is the cytoplasm. It catalyses the reaction tRNA(Gly) + glycine + ATP = glycyl-tRNA(Gly) + AMP + diphosphate. This chain is Glycine--tRNA ligase beta subunit, found in Rhizobium etli (strain ATCC 51251 / DSM 11541 / JCM 21823 / NBRC 15573 / CFN 42).